The primary structure comprises 237 residues: Uridylate kinase (237 aa).

11-14 (KLSG) contacts ATP. Gly-53 serves as a coordination point for UMP. ATP-binding residues include Gly-54 and Arg-58. Residues Asp-73 and 134-141 (TGNPFFTT) contribute to the UMP site. 3 residues coordinate ATP: Thr-161, Tyr-167, and Asp-170.

The protein belongs to the UMP kinase family. In terms of assembly, homohexamer.

It localises to the cytoplasm. It catalyses the reaction UMP + ATP = UDP + ADP. It functions in the pathway pyrimidine metabolism; CTP biosynthesis via de novo pathway; UDP from UMP (UMPK route): step 1/1. Its activity is regulated as follows. Inhibited by UTP. Functionally, catalyzes the reversible phosphorylation of UMP to UDP. The protein is Uridylate kinase of Burkholderia vietnamiensis (strain G4 / LMG 22486) (Burkholderia cepacia (strain R1808)).